The primary structure comprises 281 residues: Cytosolic Fe-S cluster assembly factor CFD1 (281 aa).

Gly24–Ser31 is a binding site for ATP. Residues Cys201 and Cys204 each coordinate [4Fe-4S] cluster.

Belongs to the Mrp/NBP35 ATP-binding proteins family. NUBP2/CFD1 subfamily. As to quaternary structure, heterotetramer of 2 NBP35 and 2 CFD1 chains. [4Fe-4S] cluster serves as cofactor.

It is found in the cytoplasm. In terms of biological role, component of the cytosolic iron-sulfur (Fe/S) protein assembly (CIA) machinery. Required for maturation of extramitochondrial Fe-S proteins. The NBP35-CFD1 heterotetramer forms a Fe-S scaffold complex, mediating the de novo assembly of an Fe-S cluster and its transfer to target apoproteins. Required for biogenesis and export of both ribosomal subunits, which may reflect a role in assembly of the Fe/S clusters in RLI1, a protein which performs rRNA processing and ribosome export. The protein is Cytosolic Fe-S cluster assembly factor CFD1 of Eremothecium gossypii (strain ATCC 10895 / CBS 109.51 / FGSC 9923 / NRRL Y-1056) (Yeast).